Consider the following 416-residue polypeptide: Probable glucan 1,3-beta-glucosidase A (416 aa).

A signal peptide spans 1–22 (MIFKFSQKALVALYLVVGLAEA). The Proton donor role is filled by Glu-211. Intrachain disulfides connect Cys-291-Cys-415 and Cys-316-Cys-342. Glu-308 acts as the Nucleophile in catalysis. Asn-344 carries N-linked (GlcNAc...) asparagine glycosylation.

This sequence belongs to the glycosyl hydrolase 5 (cellulase A) family. As to quaternary structure, monomer. Requires Mn(2+) as cofactor.

The protein localises to the secreted. The catalysed reaction is Successive hydrolysis of beta-D-glucose units from the non-reducing ends of (1-&gt;3)-beta-D-glucans, releasing alpha-glucose.. Functionally, beta-glucanases participate in the metabolism of beta-glucan, the main structural component of the cell wall. It could also function biosynthetically as a transglycosylase. In Aspergillus fumigatus (strain CBS 144.89 / FGSC A1163 / CEA10) (Neosartorya fumigata), this protein is Probable glucan 1,3-beta-glucosidase A (exgA).